A 150-amino-acid chain; its full sequence is D-aminoacyl-tRNA deacylase (150 aa).

The Gly-cisPro motif, important for rejection of L-amino acids motif lies at 136–137; that stretch reads GP.

Belongs to the DTD family. As to quaternary structure, homodimer.

The protein resides in the cytoplasm. The enzyme catalyses glycyl-tRNA(Ala) + H2O = tRNA(Ala) + glycine + H(+). The catalysed reaction is a D-aminoacyl-tRNA + H2O = a tRNA + a D-alpha-amino acid + H(+). Functionally, an aminoacyl-tRNA editing enzyme that deacylates mischarged D-aminoacyl-tRNAs. Also deacylates mischarged glycyl-tRNA(Ala), protecting cells against glycine mischarging by AlaRS. Acts via tRNA-based rather than protein-based catalysis; rejects L-amino acids rather than detecting D-amino acids in the active site. By recycling D-aminoacyl-tRNA to D-amino acids and free tRNA molecules, this enzyme counteracts the toxicity associated with the formation of D-aminoacyl-tRNA entities in vivo and helps enforce protein L-homochirality. This chain is D-aminoacyl-tRNA deacylase, found in Staphylococcus aureus (strain Mu50 / ATCC 700699).